A 459-amino-acid polypeptide reads, in one-letter code: MTSPALNFITFNQDHSCLAVGTSKGFRIYHTDPFSRIFSSDDGNIAIIEMLFSTSLVALILSPRHLIIQNTKRASTICELTFPSAVLAVRLNRKRLAVVLEEEIYLYDISNMSLLHTIATSPNPSAICALSPSSENCFIAYPLPKPREDPDANRPAHAPPQSTFVAPTSGEVLIFDTLSLKAVNVIEAHRSPLCCICLNNEGTLLATASETGTIIRVFSVPKGKKLYQFRRGTYPSTIYSMSFNLSSTLLCVSSTSDTIHIFRLGAPPGNTTPAGAPIESPASQRQDRWSRARSYDDSESPGASAADSPKNEPAELNGPGAGNNQGGHTRGSGSFSSMLRRSSQIMGRGVAGVMGSYLPQSVTEMWEPLRDFAYIKIPKSAAASGASRTLRDAPGGPLRSVVAMSSSSPQVMVVTSDGGFYVYNIDMEHGGEGYLVKQFSVNHSVLEGDDKSDASGYGS.

2 WD repeats span residues 1–39 and 188–228; these read MTSPALNFITFNQDHSCLAVGTSKGFRIYHTDPFSRIFS and AHRS…KLYQ. Positions 229–232 are necessary for proper localization to vacuole membrane; that stretch reads FRRG. Positions 229-233 match the L/FRRG motif motif; that stretch reads FRRGT. The WD 3 repeat unit spans residues 233 to 272; that stretch reads TYPSTIYSMSFNLSSTLLCVSSTSDTIHIFRLGAPPGNTT. The interval 264-339 is disordered; it reads LGAPPGNTTP…RGSGSFSSML (76 aa). Low complexity predominate over residues 265–277; it reads GAPPGNTTPAGAP. Over residues 285-296 the composition is skewed to basic and acidic residues; the sequence is RQDRWSRARSYD. Residues 319-330 show a composition bias toward gly residues; that stretch reads PGAGNNQGGHTR. A WD 4 repeat occupies 393–433; it reads APGGPLRSVVAMSSSSPQVMVVTSDGGFYVYNIDMEHGGEG.

The protein belongs to the WD repeat PROPPIN family. Component of the PI(3,5)P2 regulatory complex. Interacts with ATG2 and ATG9. The ATG2-ATG18 complex is essential for autophagosome formation.

It is found in the preautophagosomal structure membrane. The protein localises to the vacuole membrane. The protein resides in the endosome membrane. Its function is as follows. Component of the PI(3,5)P2 regulatory complex that regulates both the synthesis and turnover of phosphatidylinositol 3,5-bisphosphate (PtdIns(3,5)P2). Plays an important role in osmotically-induced vacuole fragmentation. Required for cytoplasm to vacuole transport (Cvt) vesicle formation, pexophagy and starvation-induced autophagy. Involved in correct ATG9 trafficking to the pre-autophagosomal structure. With ATG2, protects ATG8 from ATG4-mediated cleavage. Autophagy is required for proper vegetative growth, asexual/sexual reproduction, and full virulence. Autophagy is particularly involved in the biosynthesis of deoxynivalenol (DON), an important virulence determinant. The polypeptide is Autophagy-related protein 18 (Gibberella zeae (strain ATCC MYA-4620 / CBS 123657 / FGSC 9075 / NRRL 31084 / PH-1) (Wheat head blight fungus)).